The sequence spans 810 residues: Phenylalanine--tRNA ligase beta subunit (810 aa).

The tRNA-binding domain maps to 39-151 (RTWAAGVVVG…AGLQAGQPVG (113 aa)). The 87-residue stretch at 408–494 (EPEHSITLRL…RLYGYDNFGE (87 aa)) folds into the B5 domain. Residues Asp-472, Asp-478, Glu-481, and Glu-482 each coordinate Mg(2+). The FDX-ACB domain occupies 716-809 (SSFPASDRDL…LVERFRVTLR (94 aa)).

Belongs to the phenylalanyl-tRNA synthetase beta subunit family. Type 1 subfamily. In terms of assembly, tetramer of two alpha and two beta subunits. The cofactor is Mg(2+).

The protein localises to the cytoplasm. The catalysed reaction is tRNA(Phe) + L-phenylalanine + ATP = L-phenylalanyl-tRNA(Phe) + AMP + diphosphate + H(+). The protein is Phenylalanine--tRNA ligase beta subunit (pheT) of Synechococcus elongatus (strain ATCC 33912 / PCC 7942 / FACHB-805) (Anacystis nidulans R2).